The following is a 943-amino-acid chain: Isoleucine--tRNA ligase (943 aa).

The 'HIGH' region signature appears at 58–68 (PYANGSIHIGH). Position 567 (Glu567) interacts with L-isoleucyl-5'-AMP. A 'KMSKS' region motif is present at residues 608–612 (KMSKS). Lys611 contacts ATP. Residues Cys906, Cys909, Cys926, and Cys929 each coordinate Zn(2+).

Belongs to the class-I aminoacyl-tRNA synthetase family. IleS type 1 subfamily. Monomer. It depends on Zn(2+) as a cofactor.

The protein localises to the cytoplasm. The enzyme catalyses tRNA(Ile) + L-isoleucine + ATP = L-isoleucyl-tRNA(Ile) + AMP + diphosphate. Catalyzes the attachment of isoleucine to tRNA(Ile). As IleRS can inadvertently accommodate and process structurally similar amino acids such as valine, to avoid such errors it has two additional distinct tRNA(Ile)-dependent editing activities. One activity is designated as 'pretransfer' editing and involves the hydrolysis of activated Val-AMP. The other activity is designated 'posttransfer' editing and involves deacylation of mischarged Val-tRNA(Ile). The sequence is that of Isoleucine--tRNA ligase from Pseudomonas aeruginosa (strain ATCC 15692 / DSM 22644 / CIP 104116 / JCM 14847 / LMG 12228 / 1C / PRS 101 / PAO1).